The chain runs to 252 residues: Transcriptional regulatory protein HptR (252 aa).

The region spanning 3-118 (KVVICDDERI…QLEVILGRLV (116 aa)) is the Response regulatory domain. Residue D55 is modified to 4-aspartylphosphate. The HTH araC/xylS-type domain occupies 153 to 250 (NQIVDQIKQS…QMSPSDYCKQ (98 aa)). 2 consecutive DNA-binding regions (H-T-H motif) follow at residues 170–191 (SDLIQHIDVSESYAMRTFKDHV) and 217–240 (HYEIADKVGFSEYKMFSYHFKKYL).

Phosphorylated by HptS.

The protein resides in the cytoplasm. Functionally, member of the two-component regulatory system HptS/HptR that regulates genes involved in hexose phosphate transport system in response to changes in extracellular phosphate sources. Activates uhpT expression to facilitate glucose-6-phosphate/G6P utilization by directly binding to its promoter. Antagonizes CcpA-dependent transcription of a subset of CcpA-regulated genes involved in antibiotic susceptibility. In Staphylococcus aureus (strain Mu50 / ATCC 700699), this protein is Transcriptional regulatory protein HptR (hptR).